We begin with the raw amino-acid sequence, 147 residues long: Proteinase inhibitor type-2 (147 aa).

Positions 1 to 25 (MAVHKEVSFVAYLLIVLGMFLYVDA) are cleaved as a signal peptide. A run of 2 repeats spans residues 25-81 (ALGC…DPKN) and 82-141 (PKAC…DEPK). 8 cysteine pairs are disulfide-bonded: cysteine 28–cysteine 116, cysteine 32–cysteine 112, cysteine 40–cysteine 122, cysteine 52–cysteine 89, cysteine 55–cysteine 73, cysteine 56–cysteine 85, cysteine 62–cysteine 98, and cysteine 115–cysteine 133.

The protein belongs to the protease inhibitor I20 (potato type II proteinase inhibitor) family.

In Solanum tuberosum (Potato), this protein is Proteinase inhibitor type-2.